The chain runs to 192 residues: Potassium-transporting ATPase KdpC subunit (192 aa).

The helical transmembrane segment at 7–27 (PLIVIFAVLTAVTGLAYPAVM) threads the bilayer.

Belongs to the KdpC family. In terms of assembly, the system is composed of three essential subunits: KdpA, KdpB and KdpC.

It is found in the cell inner membrane. Functionally, part of the high-affinity ATP-driven potassium transport (or Kdp) system, which catalyzes the hydrolysis of ATP coupled with the electrogenic transport of potassium into the cytoplasm. This subunit acts as a catalytic chaperone that increases the ATP-binding affinity of the ATP-hydrolyzing subunit KdpB by the formation of a transient KdpB/KdpC/ATP ternary complex. The polypeptide is Potassium-transporting ATPase KdpC subunit (Paraburkholderia phytofirmans (strain DSM 17436 / LMG 22146 / PsJN) (Burkholderia phytofirmans)).